The sequence spans 500 residues: MVNASGDPVIEAAHIWSDTLTVLKHSASLSPREKGWLEGVVPEGVFGSTIVLCVDNNDTLQAIQGDLNDSLLQALRTVTGENMFPAFKVVPKTEPEPLSAAKPAQPYPSEISPTVAEFGKESYGAKPVAAPREPMPATESQFPVGQQKMNRDPETHLNKNFTFDSFVPGDSNRFARTVALAVAEGSGQDFNPLCIYGGSGLGKTHLLNAIGNYALVKDPGLKVRYVTSEEFTNEFIDALQNPNQSQGQIAEFNRRYRQVDVLLIDDIQFLGGKEATLDQFFHTFNALHQANKRIVIASDVAPKNLKGFEARLISRFESGLTVDVKPPDLETRIAILRMIASMNGSKIPSDVLDLIAERFTENIRELEGALTRVTAVASLSNQPVTRALAEQTLQDFFTTDVEIKPTDIISQVAKYFHLTFEDLVGKSRTKNVAVPRQIAMYLAREMTSMSLMDIGQVFGGRDHTTVMHACTRISDRMQQKQEIYNYVMELTVRLKQSNTN.

The domain I, interacts with DnaA modulators stretch occupies residues 1–81 (MVNASGDPVI…LQALRTVTGE (81 aa)). The segment at 81–155 (ENMFPAFKVV…QQKMNRDPET (75 aa)) is domain II. The interval 156-377 (HLNKNFTFDS…GALTRVTAVA (222 aa)) is domain III, AAA+ region. 4 residues coordinate ATP: Gly200, Gly202, Lys203, and Thr204. Residues 378–500 (SLSNQPVTRA…TVRLKQSNTN (123 aa)) form a domain IV, binds dsDNA region.

It belongs to the DnaA family. Oligomerizes as a right-handed, spiral filament on DNA at oriC.

It localises to the cytoplasm. Its function is as follows. Plays an essential role in the initiation and regulation of chromosomal replication. ATP-DnaA binds to the origin of replication (oriC) to initiate formation of the DNA replication initiation complex once per cell cycle. Binds the DnaA box (a 9 base pair repeat at the origin) and separates the double-stranded (ds)DNA. Forms a right-handed helical filament on oriC DNA; dsDNA binds to the exterior of the filament while single-stranded (ss)DNA is stabiized in the filament's interior. The ATP-DnaA-oriC complex binds and stabilizes one strand of the AT-rich DNA unwinding element (DUE), permitting loading of DNA polymerase. After initiation quickly degrades to an ADP-DnaA complex that is not apt for DNA replication. Binds acidic phospholipids. This Bifidobacterium longum subsp. infantis (strain ATCC 15697 / DSM 20088 / JCM 1222 / NCTC 11817 / S12) protein is Chromosomal replication initiator protein DnaA.